Reading from the N-terminus, the 506-residue chain is Galactose/methyl galactoside import ATP-binding protein MglA (506 aa).

2 consecutive ABC transporter domains span residues 14–249 (LEMS…VGRS) and 264–506 (VILE…SLHL). ATP is bound at residue 46-53 (GENGAGKS).

Belongs to the ABC transporter superfamily. Galactose/methyl galactoside importer (TC 3.A.1.2.3) family. As to quaternary structure, the complex is composed of one ATP-binding protein (MglA), two transmembrane proteins (MglC) and a solute-binding protein (MglB).

It is found in the cell inner membrane. It carries out the reaction D-galactose(out) + ATP + H2O = D-galactose(in) + ADP + phosphate + H(+). The catalysed reaction is methyl beta-D-galactoside(out) + ATP + H2O = methyl beta-D-galactoside(in) + ADP + phosphate + H(+). In terms of biological role, part of the ABC transporter complex MglABC involved in galactose/methyl galactoside import. Responsible for energy coupling to the transport system. This chain is Galactose/methyl galactoside import ATP-binding protein MglA, found in Escherichia coli O6:K15:H31 (strain 536 / UPEC).